The chain runs to 118 residues: UPF0102 protein NE0719 (118 aa).

This sequence belongs to the UPF0102 family.

The polypeptide is UPF0102 protein NE0719 (Nitrosomonas europaea (strain ATCC 19718 / CIP 103999 / KCTC 2705 / NBRC 14298)).